The following is a 410-amino-acid chain: F-box/WD repeat-containing protein 4 (410 aa).

An F-box domain is found at 23-69 (GPALWRLPEELLLLICSYLDTRALGRLAQVCRWLRRFTSCDLLWRPI). WD repeat units follow at residues 159-196 (GHDE…TVKY), 198-235 (AHEQ…LGQC), 289-327 (PPGA…RKCV), and 333-372 (PHDS…CLHA).

As to quaternary structure, part of a SCF (SKP1-cullin-F-box) protein ligase complex. Interacts with POUF51.

Its function is as follows. Probably recognizes and binds to some phosphorylated proteins and promotes their ubiquitination and degradation. Likely to be involved in key signaling pathways crucial for normal limb development. May participate in Wnt signaling. This chain is F-box/WD repeat-containing protein 4 (Fbxw4), found in Mus musculus (Mouse).